Here is a 239-residue protein sequence, read N- to C-terminus: tRNA1(Val) (adenine(37)-N6)-methyltransferase (239 aa).

It belongs to the methyltransferase superfamily. tRNA (adenine-N(6)-)-methyltransferase family.

Its subcellular location is the cytoplasm. It carries out the reaction adenosine(37) in tRNA1(Val) + S-adenosyl-L-methionine = N(6)-methyladenosine(37) in tRNA1(Val) + S-adenosyl-L-homocysteine + H(+). Its function is as follows. Specifically methylates the adenine in position 37 of tRNA(1)(Val) (anticodon cmo5UAC). The sequence is that of tRNA1(Val) (adenine(37)-N6)-methyltransferase from Vibrio campbellii (strain ATCC BAA-1116).